Reading from the N-terminus, the 851-residue chain is DNA mismatch repair protein MutS (851 aa).

602 to 609 (GPNMSGKS) is a binding site for ATP.

It belongs to the DNA mismatch repair MutS family.

Functionally, this protein is involved in the repair of mismatches in DNA. It is possible that it carries out the mismatch recognition step. This protein has a weak ATPase activity. The protein is DNA mismatch repair protein MutS of Streptococcus pyogenes serotype M3 (strain SSI-1).